Reading from the N-terminus, the 382-residue chain is Putative NADPH dehydrogenase C5H10.04 (382 aa).

FMN is bound by residues threonine 28 and histidine 189. Substrate contacts are provided by histidine 189 and asparagine 192. FMN-binding residues include arginine 242 and arginine 334. Substrate is bound at residue tyrosine 361.

It belongs to the NADH:flavin oxidoreductase/NADH oxidase family. In terms of assembly, homodimer or heterodimer. It depends on FMN as a cofactor.

It carries out the reaction A + NADPH + H(+) = AH2 + NADP(+). The polypeptide is Putative NADPH dehydrogenase C5H10.04 (Schizosaccharomyces pombe (strain 972 / ATCC 24843) (Fission yeast)).